The primary structure comprises 435 residues: UDP-N-acetylmuramoylalanine--D-glutamate ligase (435 aa).

114–120 (GSNGKST) contributes to the ATP binding site.

It belongs to the MurCDEF family.

It is found in the cytoplasm. The catalysed reaction is UDP-N-acetyl-alpha-D-muramoyl-L-alanine + D-glutamate + ATP = UDP-N-acetyl-alpha-D-muramoyl-L-alanyl-D-glutamate + ADP + phosphate + H(+). The protein operates within cell wall biogenesis; peptidoglycan biosynthesis. Functionally, cell wall formation. Catalyzes the addition of glutamate to the nucleotide precursor UDP-N-acetylmuramoyl-L-alanine (UMA). The protein is UDP-N-acetylmuramoylalanine--D-glutamate ligase of Haemophilus ducreyi (strain 35000HP / ATCC 700724).